The primary structure comprises 367 residues: Quinolinate synthase (367 aa).

The iminosuccinate site is built by His-45 and Ser-62. [4Fe-4S] cluster is bound at residue Cys-109. Iminosuccinate is bound by residues 140 to 142 (YVN) and Ser-161. Cys-229 provides a ligand contact to [4Fe-4S] cluster. Residues 255 to 257 (HPE) and Thr-272 contribute to the iminosuccinate site. [4Fe-4S] cluster is bound at residue Cys-319.

The protein belongs to the quinolinate synthase family. Type 3 subfamily. [4Fe-4S] cluster is required as a cofactor.

The protein localises to the cytoplasm. It carries out the reaction iminosuccinate + dihydroxyacetone phosphate = quinolinate + phosphate + 2 H2O + H(+). It participates in cofactor biosynthesis; NAD(+) biosynthesis; quinolinate from iminoaspartate: step 1/1. Its function is as follows. Catalyzes the condensation of iminoaspartate with dihydroxyacetone phosphate to form quinolinate. This Geobacillus sp. (strain WCH70) protein is Quinolinate synthase.